The chain runs to 259 residues: 5'-nucleotidase SurE (259 aa).

Aspartate 8, aspartate 9, serine 40, and asparagine 92 together coordinate a divalent metal cation.

The protein belongs to the SurE nucleotidase family. Requires a divalent metal cation as cofactor.

The protein resides in the cytoplasm. It carries out the reaction a ribonucleoside 5'-phosphate + H2O = a ribonucleoside + phosphate. Its function is as follows. Nucleotidase that shows phosphatase activity on nucleoside 5'-monophosphates. The chain is 5'-nucleotidase SurE from Xanthomonas axonopodis pv. citri (strain 306).